Reading from the N-terminus, the 615-residue chain is Protein translocase subunit SecD (615 aa).

6 consecutive transmembrane segments (helical) span residues 10-30 (YIML…NLYG), 452-472 (QGLE…IFFY), 477-497 (LIAT…MSLL), 504-524 (MPGI…NVLI), 546-568 (YAGA…IILY), and 585-605 (GVAT…NLLY).

The protein belongs to the SecD/SecF family. SecD subfamily. Forms a complex with SecF. Part of the essential Sec protein translocation apparatus which comprises SecA, SecYEG and auxiliary proteins SecDF-YajC and YidC.

The protein localises to the cell inner membrane. Part of the Sec protein translocase complex. Interacts with the SecYEG preprotein conducting channel. SecDF uses the proton motive force (PMF) to complete protein translocation after the ATP-dependent function of SecA. This Salmonella choleraesuis (strain SC-B67) protein is Protein translocase subunit SecD.